The following is a 2572-amino-acid chain: Zinc finger homeobox protein 2 (2572 aa).

Disordered stretches follow at residues 1–107 and 343–425; these read MATL…GLPP and LSPP…ADDY. Positions 8–36 are enriched in low complexity; it reads STTGTTPSPGHNAPSLPSDTFSSSTPSDP. Polar residues-rich tracts occupy residues 44-53 and 389-398; these read ASSTSENMRS and LNQSSPTSKE. 2 consecutive C2H2-type zinc fingers follow at residues 453-476 and 508-532; these read LKCPKCNWHYKYQQTLDVHMREKH and YRCDVCNYSTTTKGNLSIHMQSDKH. Disordered stretches follow at residues 537–566, 608–655, and 675–710; these read QGFQAGPGGQGSPPEASLPPSAGDKEPKTK, LPPG…LRPD, and RKFPTSAPGSLSPDAHLPPSQLLGSSSDSLPTSPPP. Pro residues predominate over residues 615 to 628; the sequence is PGPPPPPGATPTSP. The span at 696–705 shows a compositional bias: low complexity; that stretch reads LLGSSSDSLP. 2 consecutive C2H2-type zinc fingers follow at residues 821 to 845 and 870 to 894; these read LRCNICDFESNSKEKMQLHARGAAH and YHCLLCAWETPSRLAVLQHLRTPAH. The disordered stretch occupies residues 929 to 974; that stretch reads QLRTPGKAPVTPLAEPPTPEKDAQNKTEQLASEETENKTGPSRDSA. Polar residues predominate over residues 954-974; the sequence is KTEQLASEETENKTGPSRDSA. A C2H2-type 5 zinc finger spans residues 1009–1032; sequence YRCPLCQEQLVGRPALHFHLSHLH. Residues 1061–1171 are disordered; it reads PTLSPLDNGQ…PAPADSRHPL (111 aa). Over residues 1120 to 1132 the composition is skewed to pro residues; that stretch reads GQPPSPAPSPVPE. 2 C2H2-type zinc fingers span residues 1191–1217 and 1248–1272; these read YKCTVCKESFTQKNILLVHYNSVSHLH and FKCTVCRVSYNQSSTLEIHMRSVLH. 3 disordered regions span residues 1269–1325, 1389–1408, and 1415–1434; these read SVLH…FLSP, LPAATPPPPPQPPKAELAER, and MAKEGNEAGPSSPPDPLPNE. The segment covering 1279-1311 has biased composition (basic and acidic residues); that stretch reads TKTDSKIEGPERSQEEPKEGETEGEVGTEKKGP. Residues 1392–1401 are compositionally biased toward pro residues; that stretch reads ATPPPPPQPP. A C2H2-type 8 zinc finger spans residues 1480-1503; sequence LACGACGKLFSNMLILKTHEEHVH. A disordered region spans residues 1528 to 1591; that stretch reads PPLAEPPKPP…SSRGNLPPLV (64 aa). A DNA-binding region (homeobox 1) is located at residues 1595–1654; sequence RRFSRTKFTEFQTQALQSFFETSAYPKDGEVERLASLLGLASRVVVVWFQNARQKARKNA. The C2H2-type 9; degenerate zinc finger occupies 1670-1696; that stretch reads SGCRRCHATFSCVFELVRHLKKCYDDQ. Over residues 1696–1724 the composition is skewed to acidic residues; the sequence is QTLEEEEEEAERGEEEEEVEEEEVEEEQG. Disordered regions lie at residues 1696-1769, 1820-1860, 1912-2065, 2268-2327, and 2398-2431; these read QTLE…SPAH, AATS…DKRL, ERKG…GMGQ, VQTA…NDAL, and NALLQPPPQPPEPTATAPPKPPELPAPGEGEAGE. Pro residues predominate over residues 1728-1738; it reads PAGPEGPLPEP. A C2H2-type 10 zinc finger spans residues 1769–1791; that stretch reads HTCDQCAISFSSQDLLTSHRRLH. Positions 1857–1916 form a DNA-binding region, homeobox 2; that stretch reads DKRLRTTILPEQLEILYRWYMQDSNPTRKMLDCISEEVGLKKRVVQVWFQNTRARERKGQ. Positions 1925-1939 are enriched in low complexity; sequence PSPAVKPPATATPAS. Residues 1949 to 1963 are compositionally biased toward basic and acidic residues; that stretch reads KVDDGTGREAPKREA. The segment covering 1991–2004 has biased composition (pro residues); that stretch reads TPEPPLPLLPPPPP. Residues 2017 to 2044 are compositionally biased toward low complexity; that stretch reads SPESEACSLSAGDLSDSSASSLAEPESP. A compositionally biased stretch (gly residues) spans 2045-2061; it reads GAGGTSGGPGGGTGVPD. Residues 2065 to 2124 constitute a DNA-binding region (homeobox 3); that stretch reads QRRYRTQMSSLQLKIMKACYEAYRTPTMQECEVLGEEIGLPKRVIQVWFQNARAKEKKAK. Positions 2284 to 2293 are enriched in polar residues; sequence DQTNTSTAGT. Positions 2305–2315 are enriched in basic and acidic residues; it reads LGDKVSSERKP. A compositionally biased stretch (pro residues) spans 2402 to 2422; sequence QPPPQPPEPTATAPPKPPELP. Residues 2451–2471 form a C2H2-type 11; degenerate zinc finger; the sequence is YLCRQCKMAFDGEAPATAHQR. Residues 2495-2519 form a C2H2-type 12 zinc finger; the sequence is YHCLACEVLLSGREALASHLRSSAH. The tract at residues 2551–2572 is disordered; that stretch reads EARLPHTDSNPKTTTTSTLLAL. The segment covering 2563–2572 has biased composition (low complexity); sequence TTTTSTLLAL.

It localises to the nucleus. In terms of biological role, transcriptional regulator that is critical for the regulation of pain perception and processing of noxious stimuli. This Homo sapiens (Human) protein is Zinc finger homeobox protein 2 (ZFHX2).